A 40-amino-acid polypeptide reads, in one-letter code: U2-ctenitoxin-Pr1a (40 aa).

4 disulfide bridges follow: C2–C17, C9–C22, C16–C32, and C24–C30.

Expressed by the venom gland.

Its subcellular location is the secreted. Functionally, neurotoxin. The polypeptide is U2-ctenitoxin-Pr1a (Phoneutria reidyi (Brazilian Amazonian armed spider)).